The chain runs to 493 residues: Cysteine--tRNA ligase (493 aa).

Cys-29 is a Zn(2+) binding site. The 'HIGH' region motif lies at Pro-31 to Asn-41. Zn(2+) is bound by residues Cys-227, His-252, and Glu-256. The short motif at Lys-285–Ser-289 is the 'KMSKS' region element. Lys-288 is a binding site for ATP.

This sequence belongs to the class-I aminoacyl-tRNA synthetase family. In terms of assembly, monomer. The cofactor is Zn(2+).

It localises to the cytoplasm. It carries out the reaction tRNA(Cys) + L-cysteine + ATP = L-cysteinyl-tRNA(Cys) + AMP + diphosphate. This is Cysteine--tRNA ligase from Rhodopseudomonas palustris (strain HaA2).